Consider the following 297-residue polypeptide: Acetylglutamate kinase (297 aa).

Residues 68-69 (GG), arginine 90, and asparagine 189 each bind substrate.

Belongs to the acetylglutamate kinase family. ArgB subfamily.

The protein resides in the cytoplasm. The enzyme catalyses N-acetyl-L-glutamate + ATP = N-acetyl-L-glutamyl 5-phosphate + ADP. It functions in the pathway amino-acid biosynthesis; L-arginine biosynthesis; N(2)-acetyl-L-ornithine from L-glutamate: step 2/4. Its function is as follows. Catalyzes the ATP-dependent phosphorylation of N-acetyl-L-glutamate. The polypeptide is Acetylglutamate kinase (Akkermansia muciniphila (strain ATCC BAA-835 / DSM 22959 / JCM 33894 / BCRC 81048 / CCUG 64013 / CIP 107961 / Muc)).